An 89-amino-acid chain; its full sequence is Putative regulatory protein CPE1749 (89 aa).

Belongs to the RemA family.

This chain is Putative regulatory protein CPE1749, found in Clostridium perfringens (strain 13 / Type A).